The sequence spans 457 residues: Cysteine--tRNA ligase (457 aa).

Cys-28 provides a ligand contact to Zn(2+). The 'HIGH' region signature appears at 30–40 (MTVYDYCHLGH). The Zn(2+) site is built by Cys-209, His-234, and Glu-238. Positions 266 to 270 (KMSKS) match the 'KMSKS' region motif. Residue Lys-269 participates in ATP binding.

This sequence belongs to the class-I aminoacyl-tRNA synthetase family. In terms of assembly, monomer. Requires Zn(2+) as cofactor.

Its subcellular location is the cytoplasm. The catalysed reaction is tRNA(Cys) + L-cysteine + ATP = L-cysteinyl-tRNA(Cys) + AMP + diphosphate. This is Cysteine--tRNA ligase from Laribacter hongkongensis (strain HLHK9).